Consider the following 410-residue polypeptide: Cathepsin D (410 aa).

Positions 1-20 (MKTPGVLLLILGLLASSSFA) are cleaved as a signal peptide. The propeptide at 21 to 64 (IIRIPLRKFTSIRRTMTEVGGSVEDLILKGPITKYSMQSSPKTT) is activation peptide. Residues 79–405 (YYGDIGIGTP…DRDNNRVGFA (327 aa)) enclose the Peptidase A1 domain. 2 cysteine pairs are disulfide-bonded: Cys91-Cys160 and Cys110-Cys117. Asp97 is an active-site residue. Residue Asn134 is glycosylated (N-linked (GlcNAc...) asparagine). N-linked (GlcNAc...) (high mannose) asparagine glycosylation occurs at Asn261. A disulfide bridge connects residues Cys284 and Cys288. Asp293 is an active-site residue. A disulfide bridge connects residues Cys327 and Cys364.

The protein belongs to the peptidase A1 family. Consists of a light chain and a heavy chain. Interacts with ADAM30; this leads to activation of CTSD. Interacts with GRN; stabilizes CTSD; increases its proteolytic activity. N- and O-glycosylated. Post-translationally, undergoes proteolytic cleavage and activation by ADAM30.

It localises to the lysosome. Its subcellular location is the melanosome. The protein localises to the secreted. It is found in the extracellular space. It catalyses the reaction Specificity similar to, but narrower than, that of pepsin A. Does not cleave the 4-Gln-|-His-5 bond in B chain of insulin.. Acid protease active in intracellular protein breakdown. Plays a role in APP processing following cleavage and activation by ADAM30 which leads to APP degradation. This chain is Cathepsin D (Ctsd), found in Mus musculus (Mouse).